The primary structure comprises 506 residues: RNA-splicing ligase RtcB homolog (506 aa).

Mn(2+) contacts are provided by aspartate 120, cysteine 123, histidine 228, histidine 260, and histidine 354. 227 to 231 (NHYAE) serves as a coordination point for GMP. GMP is bound by residues 354-355 (HN), 403-406 (GGSM), serine 410, 429-432 (HGAG), and lysine 505. Histidine 429 functions as the GMP-histidine intermediate in the catalytic mechanism.

The protein belongs to the RtcB family. As to quaternary structure, catalytic component of the tRNA-splicing ligase complex. Requires Mn(2+) as cofactor.

It catalyses the reaction a 3'-end 3'-phospho-ribonucleotide-RNA + a 5'-end dephospho-ribonucleoside-RNA + GTP = a ribonucleotidyl-ribonucleotide-RNA + GMP + diphosphate. The enzyme catalyses a 3'-end 2',3'-cyclophospho-ribonucleotide-RNA + a 5'-end dephospho-ribonucleoside-RNA + GTP + H2O = a ribonucleotidyl-ribonucleotide-RNA + GMP + diphosphate + H(+). Catalytic subunit of the tRNA-splicing ligase complex that acts by directly joining spliced tRNA halves to mature-sized tRNAs by incorporating the precursor-derived splice junction phosphate into the mature tRNA as a canonical 3',5'-phosphodiester. May act as an RNA ligase with broad substrate specificity, and may function toward other RNAs. This Aedes aegypti (Yellowfever mosquito) protein is RNA-splicing ligase RtcB homolog.